Consider the following 283-residue polypeptide: tRNA-cytidine(32) 2-sulfurtransferase (283 aa).

The short motif at 49–54 is the PP-loop motif element; sequence SGGKDS. Positions 124, 127, and 215 each coordinate [4Fe-4S] cluster.

The protein belongs to the TtcA family. As to quaternary structure, homodimer. Mg(2+) serves as cofactor. Requires [4Fe-4S] cluster as cofactor.

Its subcellular location is the cytoplasm. The enzyme catalyses cytidine(32) in tRNA + S-sulfanyl-L-cysteinyl-[cysteine desulfurase] + AH2 + ATP = 2-thiocytidine(32) in tRNA + L-cysteinyl-[cysteine desulfurase] + A + AMP + diphosphate + H(+). The protein operates within tRNA modification. In terms of biological role, catalyzes the ATP-dependent 2-thiolation of cytidine in position 32 of tRNA, to form 2-thiocytidine (s(2)C32). The sulfur atoms are provided by the cysteine/cysteine desulfurase (IscS) system. The protein is tRNA-cytidine(32) 2-sulfurtransferase of Acaryochloris marina (strain MBIC 11017).